The primary structure comprises 203 residues: Dephospho-CoA kinase (203 aa).

Residues 4 to 203 (VIGITGGIAT…EEGYIQSESE (200 aa)) enclose the DPCK domain. ATP is bound at residue 12–17 (ATGKST).

The protein belongs to the CoaE family.

It is found in the cytoplasm. It catalyses the reaction 3'-dephospho-CoA + ATP = ADP + CoA + H(+). The protein operates within cofactor biosynthesis; coenzyme A biosynthesis; CoA from (R)-pantothenate: step 5/5. Its function is as follows. Catalyzes the phosphorylation of the 3'-hydroxyl group of dephosphocoenzyme A to form coenzyme A. The protein is Dephospho-CoA kinase of Staphylococcus epidermidis (strain ATCC 35984 / DSM 28319 / BCRC 17069 / CCUG 31568 / BM 3577 / RP62A).